The sequence spans 1103 residues: Voltage-dependent calcium channel subunit alpha-2/delta-1 (1103 aa).

A signal peptide spans 1–24 (MAAGCLLALTLTLFQSGLIGPSSE). Residues 25–1073 (EPFPSPVTIK…VLEDYTDCGG (1049 aa)) are Extracellular-facing. Asn92 carries N-linked (GlcNAc...) asparagine glycosylation. Ser119 is modified (phosphoserine). N-linked (GlcNAc...) asparagine glycosylation is found at Asn136 and Asn184. Positions 253 to 430 (DMLILVDVSG…INTQEYLDVL (178 aa)) constitute a VWFA domain. A divalent metal cation-binding residues include Asp259, Ser261, and Ser263. The MIDAS-like motif signature appears at 259-263 (DVSGS). N-linked (GlcNAc...) asparagine glycans are attached at residues Asn324 and Asn348. Cys404 and Cys1059 are oxidised to a cystine. The region spanning 446–537 (WTNVYLDALE…QPKPIGVGIP (92 aa)) is the Cache domain. Residues Asn613, Asn781, and Asn888 are each glycosylated (N-linked (GlcNAc...) asparagine). Residues 1074 to 1094 (VSGLNPSLWSIFGLQFILLWL) traverse the membrane as a helical segment. At 1095–1103 (VSGSRHYLL) the chain is on the cytoplasmic side.

Belongs to the calcium channel subunit alpha-2/delta family. In terms of assembly, dimer formed of alpha-2-1 and delta-1 chains; disulfide-linked. Voltage-dependent calcium channels are multisubunit complexes, consisting of alpha-1 (CACNA1), alpha-2 (CACNA2D), beta (CACNB) and delta (CACNA2D) subunits in a 1:1:1:1 ratio. In terms of processing, proteolytically processed into subunits alpha-2-1 and delta-1 that are disulfide-linked. As to expression, isoform 2A is expressed in skeletal muscle and aorta. Isoform 2B is expressed in brain. Isoform 2C is expressed in heart. Isoform 2D is expressed in heart and smooth muscle. Isoform 2E is expressed in smooth muscle. All five isoforms are expressed in the cardiovascular system.

The protein resides in the membrane. Its subcellular location is the cell membrane. Its function is as follows. The alpha-2/delta subunit of voltage-dependent calcium channels regulates calcium current density and activation/inactivation kinetics of the calcium channel. Plays an important role in excitation-contraction coupling. This Mus musculus (Mouse) protein is Voltage-dependent calcium channel subunit alpha-2/delta-1 (Cacna2d1).